Reading from the N-terminus, the 551-residue chain is MAVPVPLGRFGSFCLRLLRLLALLELLVHPVLGRVHHLALKDDVRHKVHLNTFGFFKDGYMVVNVSSLSVNEPEGATDKDAEIGFSLDRTKNDGFSSYLDEDVNYCILKKKSMSSVTLVILDISGSIVKVRSPPEAGKQLPEIVFSKDEKILSQSQEPAVSSNPKDSEARRTLDGFKAGRSTVDSKAITERSFSIHKNDGVVSFQFFFNISTDDQEGLYSLYFHKCSGNNVKPGEQASFSLNIAITEKNPNSYLSAGEIPLPKLYVSMALFFFLSGTIWIHILRKRRNDVFKIHWLMAALPFTKSLSLVFHAIDYHYISSQGFPIEGWAVVYYITHLLKGALLFITIALIGTGWAFIKHILSDKDKKIFMIVIPLQVLANVAYIIIESTEEGTTEYGLWKDSLFLVDLLCCGAILFPVVWSIRHLQEASATDGKAAINLAKLRLFRHYYVLIVCYIYFTRIIAFLLKFAVPFQWKWLYQLLDETATLVFFVLTGYKFRPASDNPYLQLSQEDDDLEMESVVTTSGVMENMKKVKKVSNGAVEPQGSWEGTA.

A signal peptide spans 1–33; it reads MAVPVPLGRFGSFCLRLLRLLALLELLVHPVLG. Over 40 to 262 the chain is Extracellular; it reads LKDDVRHKVH…YLSAGEIPLP (223 aa). Residues Asn64 and Asn209 are each glycosylated (N-linked (GlcNAc...) asparagine). An intrachain disulfide couples Cys106 to Cys226. The helical transmembrane segment at 263–283 threads the bilayer; sequence KLYVSMALFFFLSGTIWIHIL. At 284–292 the chain is on the cytoplasmic side; the sequence is RKRRNDVFK. Residues 293-313 traverse the membrane as a helical segment; it reads IHWLMAALPFTKSLSLVFHAI. Residues 314–336 are Extracellular-facing; the sequence is DYHYISSQGFPIEGWAVVYYITH. The chain crosses the membrane as a helical span at residues 337–357; that stretch reads LLKGALLFITIALIGTGWAFI. The Cytoplasmic segment spans residues 358–367; that stretch reads KHILSDKDKK. Residues 368–388 traverse the membrane as a helical segment; the sequence is IFMIVIPLQVLANVAYIIIES. At 389–401 the chain is on the extracellular side; sequence TEEGTTEYGLWKD. The chain crosses the membrane as a helical span at residues 402–422; sequence SLFLVDLLCCGAILFPVVWSI. The Cytoplasmic portion of the chain corresponds to 423 to 449; the sequence is RHLQEASATDGKAAINLAKLRLFRHYY. The helical transmembrane segment at 450-470 threads the bilayer; it reads VLIVCYIYFTRIIAFLLKFAV. Topologically, residues 471 to 475 are extracellular; it reads PFQWK. The helical transmembrane segment at 476 to 495 threads the bilayer; sequence WLYQLLDETATLVFFVLTGY. Over 496-551 the chain is Cytoplasmic; that stretch reads KFRPASDNPYLQLSQEDDDLEMESVVTTSGVMENMKKVKKVSNGAVEPQGSWEGTA. Position 537 is a phosphoserine (Ser537).

Belongs to the LU7TM family. Cleaved by FURIN to yield two fragments that remain associated via a disulfide bond.

It localises to the cell membrane. Its subcellular location is the golgi apparatus. It is found in the trans-Golgi network membrane. In terms of biological role, has been proposed to act as a receptor for neuronostatin, a peptide derived from the somatostatin/SST precursor. Involved in blood sugar regulation through the induction of glucagon in response to low glucose. The polypeptide is Protein GPR107 (Gpr107) (Mus musculus (Mouse)).